We begin with the raw amino-acid sequence, 1230 residues long: Potassium channel subfamily T member 1 (1230 aa).

The disordered stretch occupies residues 1 to 37 (MARAKLPRSPSEGKAGPGGAPAGAAAPEEPHGLSPLL). Residues 1-93 (MARAKLPRSP…LFFIKNQRSS (93 aa)) lie on the Cytoplasmic side of the membrane. The helical transmembrane segment at 94–126 (LRIRLFNFSLKLLTCLLYIVRVLLDDPALGIGC) threads the bilayer. The Extracellular portion of the chain corresponds to 127–153 (WGCPKQNYSFNDSSSEINWAPILWVER). N-linked (GlcNAc...) asparagine glycans are attached at residues Asn133 and Asn137. The chain crosses the membrane as a helical span at residues 154–178 (KMTLWAIQVIVAIISFLETMLLIYL). Residues 179 to 192 (SYKGNIWEQIFRVS) are Cytoplasmic-facing. The chain crosses the membrane as a helical span at residues 193–208 (FVLEMINTLPFIITIF). Over 209–215 (WPPLRNL) the chain is Extracellular. Residues 216–233 (FIPVFLNCWLAKHALENM) form a helical membrane-spanning segment. The Cytoplasmic portion of the chain corresponds to 234–246 (INDFHRAILRTQS). A helical membrane pass occupies residues 247–274 (AMFNQVLILFCTLLCLVFTGTCGIQHLE). At 275 to 281 (RAGENLS) the chain is on the extracellular side. The pore-forming intramembrane region spans 282–302 (LLTSFYFCIVTFSTVGYGDVT). 2 residues coordinate K(+): Val296 and Gly297. The Extracellular segment spans residues 303–304 (PK). Residues 305 to 338 (IWPSQLLVVIMICVALVVLPLQFEELVYLWMERQ) traverse the membrane as a helical segment. Over 339–1230 (KSGGNYSRHR…NPETRDETQL (892 aa)) the chain is Cytoplasmic. The RCK N-terminal 1 domain occupies 352–488 (EKHVVLCVSS…FHVKFADHVV (137 aa)). Residues Leu513, His516, Ser538, and Asn540 each coordinate Na(+). Residues 660–689 (TEHRPTQSGGGGGGSKLALPTENGSGSRRP) are disordered. Zn(2+) contacts are provided by Cys758 and Cys759. The K(+) site is built by Arg761 and Lys764. Residues Arg761 and Lys764 each coordinate Na(+). Positions 766 and 768 each coordinate Zn(2+). K(+)-binding residues include Asn769, Tyr771, Tyr777, and Gly778. Tyr771 is a binding site for Na(+). Phe779 is a Na(+) binding site. The region spanning 781–921 (NKLIIVSAET…QFRAKDSYSL (141 aa)) is the RCK N-terminal 2 domain. The K(+) site is built by Ser787, Leu818, Asp820, Gly842, and Asp865. 2 disordered regions span residues 1048–1078 (EVKG…EHPL) and 1204–1230 (SSSQ…ETQL). Over residues 1057–1072 (AGTGGSSQGRHTGGGD) the composition is skewed to gly residues. Residues 1204-1219 (SSSQSRKSSCSHKLSS) are compositionally biased toward low complexity.

It belongs to the potassium channel family. Calcium-activated (TC 1.A.1.3) subfamily. KCa4.1/KCNT1 sub-subfamily. Homotetramer; which constitutes the Na(+)-activated K(+) channel. Interacts with KCNT2; these heterodimer channels differ from the homomers in their unitary conductance, kinetic behavior, subcellular localization, and response to activation of protein kinase C. Interacts (via C-terminus) with FMR1; this interaction alters gating properties of KCNT1. Interacts with CRBN via its cytoplasmic C-terminus. Post-translationally, phosphorylated by protein kinase C. Phosphorylation of the C-terminal domain increases channel activity. Highest expression in liver, brain and spinal cord. Lowest expression in skeletal muscle.

The protein resides in the cell membrane. The enzyme catalyses K(+)(in) = K(+)(out). With respect to regulation, activated by high intracellular Na(+). In addition to activation by Na(+), is cooperatively activated by intracellular Cl(-) levels. Inhibited by Zn(2+). Activated upon stimulation of G-protein coupled receptors, such as CHRM1 and GRIA1. In terms of biological role, sodium-activated K(+) channel. Acts as an important mediator of neuronal membrane excitability. Contributes to the delayed outward currents. Regulates neuronal bursting in sensory neurons. Contributes to synaptic development and plasticity. The protein is Potassium channel subfamily T member 1 of Homo sapiens (Human).